A 42-amino-acid polypeptide reads, in one-letter code: Protein YkgS (42 aa).

The polypeptide is Protein YkgS (ykgS) (Escherichia coli (strain K12)).